The chain runs to 3411 residues: Genome polyprotein (3411 aa).

Over 1 to 104 (MSGRKAQGKT…LSSRKRRSHD (104 aa)) the chain is Cytoplasmic. Residues 38-72 (PGPSRGVQGFIFFFLFNILTGKKITAQLKRLWKML) are hydrophobic; homodimerization of capsid protein C. The propeptide at 102–121 (SHDVLTVQFLILGMLLMTGG) is ER anchor for the capsid protein C, removed in mature form by serine protease NS3. A helical membrane pass occupies residues 105-125 (VLTVQFLILGMLLMTGGVTLM). At 126 to 244 (RKNRWLLLNV…GERQLQKIER (119 aa)) the chain is on the extracellular side. Residues asparagine 134 and asparagine 150 are each glycosylated (N-linked (GlcNAc...) asparagine; by host). The helical transmembrane segment at 245-265 (WFVRNPFFAVTALTIAYLVGS) threads the bilayer. Over 266–270 (NMTQR) the chain is Cytoplasmic. Residues 271–285 (VVIALLVLAVGPAYS) form a helical membrane-spanning segment. Over 286–730 (AHCIGVADRD…TVFGSAFQGL (445 aa)) the chain is Extracellular. 8 disulfides stabilise this stretch: cysteine 288–cysteine 315, cysteine 345–cysteine 401, cysteine 345–cysteine 406, cysteine 359–cysteine 390, cysteine 377–cysteine 401, cysteine 377–cysteine 406, cysteine 467–cysteine 568, and cysteine 585–cysteine 615. The interval 383-396 (DRGWGNGCGLFGKG) is fusion peptide. A helical membrane pass occupies residues 731-751 (FGGLNWITKVIMGAVLIWVGF). Residues 752 to 757 (NTRNMT) lie on the Cytoplasmic side of the membrane. A helical membrane pass occupies residues 758–778 (MSMSMILVGVIMMFLSLGVGA). Residues 779 to 1132 (DQGCAINFGK…LVRSWVTAGE (354 aa)) are Extracellular-facing. 6 cysteine pairs are disulfide-bonded: cysteine 782-cysteine 793, cysteine 833-cysteine 921, cysteine 957-cysteine 1002, cysteine 1058-cysteine 1107, cysteine 1069-cysteine 1091, and cysteine 1090-cysteine 1094. N-linked (GlcNAc...) asparagine; by host glycans are attached at residues asparagine 908 and asparagine 986. The chain crosses the membrane as a helical span at residues 1133–1153 (IHAVPFGLVSMMIAMEVVLRK). Over 1154-1201 (RQGPKQVLVGGVVLLGAMLVGQVTLLDLLELTVAVGLHFHEMNNGGDA) the chain is Cytoplasmic. The helical transmembrane segment at 1202 to 1222 (MYMALIAAFSVRPGLLIGFGL) threads the bilayer. The Lumenal segment spans residues 1223–1287 (RTLWSPRERL…ILPLMALLTP (65 aa)). The helical transmembrane segment at 1288–1308 (VTMAEVRLATMLFCTVVIIGV) threads the bilayer. The Cytoplasmic segment spans residues 1309 to 1355 (LHQNSKDTSMQKTIPLVALTLTSYLGLTQPFLGLCAFLATRIFGRRS). Residues 1356 to 1376 (IPVNEALAATGLVGVLAGLAF) traverse the membrane as a helical segment. Over 1377–1378 (QE) the chain is Lumenal. Residues 1379–1399 (MENFLGPIAVGGILMMLVSVA) traverse the membrane as a helical segment. Over 1400 to 1456 (GRVDGLELKKLGEVSWEEEAEISGSSARYDVALSEQGEFKLLSEEKVPWDQVVMTSL) the chain is Cytoplasmic. The interval 1407–1446 (LKKLGEVSWEEEAEISGSSARYDVALSEQGEFKLLSEEKV) is interacts with and activates NS3 protease. Residues 1457 to 1477 (ALVGAAIHPFALLLVLAGWLF) constitute an intramembrane region (helical). The Cytoplasmic portion of the chain corresponds to 1478 to 2157 (HVRRARRSGD…RNALSMMPEA (680 aa)). Residues 1485–1665 (SGDVLWDIPT…EVKEEGKEEL (181 aa)) enclose the Peptidase S7 domain. Active-site charge relay system; for serine protease NS3 activity residues include histidine 1537, aspartate 1561, and serine 1622. The 157-residue stretch at 1669 to 1825 (PTMLKKGKTT…HSNGEIEDVQ (157 aa)) folds into the Helicase ATP-binding domain. The tract at residues 1673 to 1676 (KKGK) is important for RNA-binding. 1682 to 1689 (FHPGAGKT) contributes to the ATP binding site. Positions 1773–1776 (DEAH) match the DEAH box motif. The 178-residue stretch at 1820–1997 (EIEDVQTDIP…VRGGMVAPLY (178 aa)) folds into the Helicase C-terminal domain. Position 1877 is an N6-acetyllysine; by host (lysine 1877). Residues 1942–1961 (AAQRRGRIGRNPNRDGDSYY) form a disordered region. Residues 2158-2178 (MTIVMLFLLAGLLTSGMVIFF) traverse the membrane as a helical segment. The Lumenal portion of the chain corresponds to 2179-2186 (MSPKGISR). The helical intramembrane region spans 2187 to 2207 (MSMAKGTMAGCGYLMFLGGVE). At 2208-2209 (PT) the chain is on the lumenal side. A helical transmembrane segment spans residues 2210–2230 (HISYIMLIFFVLMVVVIPEPG). The Cytoplasmic segment spans residues 2231–2241 (QQRSIQDNQVA). A helical transmembrane segment spans residues 2242-2256 (FLIIGILTLVSVVAA). Residues 2257–2293 (NELGMLEKTKEDLFGKKNLIPSGASPWSWPDLDLKPG) are Lumenal-facing. Residues 2294-2314 (AAWTVYVGIVTMLSPMLHHWI) constitute an intramembrane region (helical). At 2315 to 2360 (KVEYGNLSLSGIAQSASVLSFMDKGIPFMKMNISVIMLLVSGWNSI) the chain is on the lumenal side. The chain crosses the membrane as a helical span at residues 2361–2380 (TVMPLLCGIGCAMLHWSLIL). At 2381–2421 (PGIKAQQSKLAQRRVFHGVAKNPVVDGNPTVDIEEAPEMPA) the chain is on the cytoplasmic side. Residues 2422–2442 (LYEKKLALYLLLALSLASVAM) form a helical membrane-spanning segment. Residues 2443 to 2445 (CRT) lie on the Lumenal side of the membrane. Residues 2446-2466 (PFSLDEGIVLASAALGPLIEG) traverse the membrane as a helical segment. The Cytoplasmic segment spans residues 2467-3411 (NTSLLWNGPM…DADLQPGELI (945 aa)). One can recognise an mRNA cap 0-1 NS5-type MT domain in the interval 2507–2771 (GTANGKTLGE…DVTLPIGTRS (265 aa)). Residue serine 2562 participates in S-adenosyl-L-methionine binding. Serine 2562 bears the Phosphoserine mark. The For 2'-O-MTase activity role is filled by lysine 2567. Glycine 2592, tryptophan 2593, threonine 2610, leucine 2611, aspartate 2637, and valine 2638 together coordinate S-adenosyl-L-methionine. The For 2'-O-MTase activity role is filled by aspartate 2652. Isoleucine 2653 serves as a coordination point for S-adenosyl-L-methionine. Active-site for 2'-O-MTase activity residues include lysine 2688 and glutamate 2724. Position 2726 (tyrosine 2726) interacts with S-adenosyl-L-methionine. Positions 2878-2911 (RKIMKVVNRWLFRHLAREKNPRLCTKEEFIAKVR) match the Nuclear localization signal motif. Glutamate 2945, histidine 2949, cysteine 2954, and cysteine 2957 together coordinate Zn(2+). Residues 3035–3187 (GGLYADDTAG…RPIDDRFGLA (153 aa)) form the RdRp catalytic domain. Zn(2+) is bound by residues histidine 3222, cysteine 3238, and cysteine 3357.

This sequence in the N-terminal section; belongs to the class I-like SAM-binding methyltransferase superfamily. mRNA cap 0-1 NS5-type methyltransferase family. Homodimer. Interacts (via N-terminus) with host EXOC1 (via C-terminus); this interaction results in EXOC1 degradation through the proteasome degradation pathway. In terms of assembly, forms heterodimers with envelope protein E in the endoplasmic reticulum and Golgi. As to quaternary structure, homodimer; in the endoplasmic reticulum and Golgi. Interacts with protein prM. Interacts with non-structural protein 1. Homodimer; Homohexamer when secreted. Interacts with envelope protein E. In terms of assembly, interacts (via N-terminus) with serine protease NS3. As to quaternary structure, forms a heterodimer with serine protease NS3. May form homooligomers. Forms a heterodimer with NS2B. Interacts with non-structural protein 2A (via N-terminus). Interacts with NS4B. Interacts with unphosphorylated RNA-directed RNA polymerase NS5; this interaction stimulates RNA-directed RNA polymerase NS5 guanylyltransferase activity. NS3 interacts with host PDCD6IP; this interaction contributes to virion release. In terms of assembly, interacts with serine protease NS3. As to quaternary structure, homodimer. Interacts with host STAT2; this interaction prevents the establishment of cellular antiviral state. Interacts with serine protease NS3. Interacts with host TRIM23; this interaction leads to NS5 ubiquitination. In terms of processing, specific enzymatic cleavages in vivo yield mature proteins. The nascent capsid protein C contains a C-terminal hydrophobic domain that act as a signal sequence for translocation of prM into the lumen of the ER. Mature capsid protein C is cleaved at a site upstream of this hydrophobic domain by NS3. prM is cleaved in post-Golgi vesicles by a host furin, releasing the mature small envelope protein M, and peptide pr. Non-structural protein 2A-alpha, a C-terminally truncated form of non-structural protein 2A, results from partial cleavage by NS3. Specific enzymatic cleavages in vivo yield mature proteins peptide 2K acts as a signal sequence and is removed from the N-terminus of NS4B by the host signal peptidase in the ER lumen. Signal cleavage at the 2K-4B site requires a prior NS3 protease-mediated cleavage at the 4A-2K site. Cleaved in post-Golgi vesicles by a host furin, releasing the mature small envelope protein M, and peptide pr. This cleavage is incomplete as up to 30% of viral particles still carry uncleaved prM. Post-translationally, N-glycosylated. In terms of processing, N-glycosylated. The excreted form is glycosylated and this is required for efficient secretion of the protein from infected cells. Polyubiquitinated; ubiquitination is probably mediated by host TRIM23 and is prerequisite for NS5-STAT2 interaction. NS5 is not ISGylated or sumoylated. Post-translationally, acetylated by host KAT5. Acetylation modulates NS3 RNA-binding and unwinding activities and plays an important positive role for viral replication. In terms of processing, phosphorylated on serines residues. This phosphorylation may trigger NS5 nuclear localization.

It localises to the virion. It is found in the host nucleus. The protein localises to the host cytoplasm. Its subcellular location is the host perinuclear region. The protein resides in the secreted. It localises to the virion membrane. It is found in the host endoplasmic reticulum membrane. It catalyses the reaction Selective hydrolysis of -Xaa-Xaa-|-Yaa- bonds in which each of the Xaa can be either Arg or Lys and Yaa can be either Ser or Ala.. It carries out the reaction RNA(n) + a ribonucleoside 5'-triphosphate = RNA(n+1) + diphosphate. The enzyme catalyses a ribonucleoside 5'-triphosphate + H2O = a ribonucleoside 5'-diphosphate + phosphate + H(+). The catalysed reaction is ATP + H2O = ADP + phosphate + H(+). It catalyses the reaction a 5'-end (5'-triphosphoguanosine)-ribonucleoside in mRNA + S-adenosyl-L-methionine = a 5'-end (N(7)-methyl 5'-triphosphoguanosine)-ribonucleoside in mRNA + S-adenosyl-L-homocysteine. It carries out the reaction a 5'-end (N(7)-methyl 5'-triphosphoguanosine)-ribonucleoside in mRNA + S-adenosyl-L-methionine = a 5'-end (N(7)-methyl 5'-triphosphoguanosine)-(2'-O-methyl-ribonucleoside) in mRNA + S-adenosyl-L-homocysteine + H(+). Plays a role in virus budding by binding to the cell membrane and gathering the viral RNA into a nucleocapsid that forms the core of a mature virus particle. During virus entry, may induce genome penetration into the host cytoplasm after hemifusion induced by the surface proteins. Can migrate to the cell nucleus where it modulates host functions. Its function is as follows. Inhibits RNA silencing by interfering with host Dicer. Functionally, prevents premature fusion activity of envelope proteins in trans-Golgi by binding to envelope protein E at pH6.0. After virion release in extracellular space, gets dissociated from E dimers. In terms of biological role, acts as a chaperone for envelope protein E during intracellular virion assembly by masking and inactivating envelope protein E fusion peptide. prM is the only viral peptide matured by host furin in the trans-Golgi network probably to avoid catastrophic activation of the viral fusion activity in acidic Golgi compartment prior to virion release. prM-E cleavage is inefficient, and many virions are only partially matured. These uncleaved prM would play a role in immune evasion. May play a role in virus budding. Exerts cytotoxic effects by activating a mitochondrial apoptotic pathway through M ectodomain. May display a viroporin activity. Its function is as follows. Binds to host cell surface receptor and mediates fusion between viral and cellular membranes. Envelope protein is synthesized in the endoplasmic reticulum in the form of heterodimer with protein prM. They play a role in virion budding in the ER, and the newly formed immature particle is covered with 60 spikes composed of heterodimer between precursor prM and envelope protein E. The virion is transported to the Golgi apparatus where the low pH causes dissociation of PrM-E heterodimers and formation of E homodimers. prM-E cleavage is inefficient, and many virions are only partially matured. These uncleaved prM would play a role in immune evasion. Functionally, involved in immune evasion, pathogenesis and viral replication. Once cleaved off the polyprotein, is targeted to three destinations: the viral replication cycle, the plasma membrane and the extracellular compartment. Essential for viral replication. Required for formation of the replication complex and recruitment of other non-structural proteins to the ER-derived membrane structures. Excreted as a hexameric lipoparticle that plays a role against host immune response. Antagonizing the complement function. Binds to the host macrophages and dendritic cells. Inhibits signal transduction originating from Toll-like receptor 3 (TLR3). In terms of biological role, component of the viral RNA replication complex that functions in virion assembly and antagonizes the host immune response. Required cofactor for the serine protease function of NS3. May have membrane-destabilizing activity and form viroporins. Its function is as follows. Displays three enzymatic activities: serine protease, NTPase and RNA helicase. NS3 serine protease, in association with NS2B, performs its autocleavage and cleaves the polyprotein at dibasic sites in the cytoplasm: C-prM, NS2A-NS2B, NS2B-NS3, NS3-NS4A, NS4A-2K and NS4B-NS5. NS3 RNA helicase binds RNA and unwinds dsRNA in the 3' to 5' direction. Also plays a role in virus assembly. Functionally, regulates the ATPase activity of the NS3 helicase activity. NS4A allows NS3 helicase to conserve energy during unwinding. In terms of biological role, functions as a signal peptide for NS4B and is required for the interferon antagonism activity of the latter. Induces the formation of ER-derived membrane vesicles where the viral replication takes place. Inhibits interferon (IFN)-induced host STAT1 phosphorylation and nuclear translocation, thereby preventing the establishment of cellular antiviral state by blocking the IFN-alpha/beta pathway. Its function is as follows. Replicates the viral (+) and (-) RNA genome, and performs the capping of genomes in the cytoplasm. NS5 methylates viral RNA cap at guanine N-7 and ribose 2'-O positions. Besides its role in RNA genome replication, also prevents the establishment of cellular antiviral state by blocking the interferon-alpha/beta (IFN-alpha/beta) signaling pathway. IFN-I induces binding of NS5 to host IFN-activated transcription factor STAT2, preventing its transcriptional activity. Host TRIM23 is the E3 ligase that interacts with and polyubiquitinates NS5 to promote its binding to STAT2 and trigger IFN-I signaling inhibition. This Aedes aegypti (Yellowfever mosquito) protein is Genome polyprotein.